A 184-amino-acid chain; its full sequence is Acyl-homoserine-lactone synthase (184 aa).

Belongs to the autoinducer synthase family.

It catalyses the reaction a fatty acyl-[ACP] + S-adenosyl-L-methionine = an N-acyl-L-homoserine lactone + S-methyl-5'-thioadenosine + holo-[ACP] + H(+). Involved in the synthesis of the acyl-homoserine lactone (AHL) signal N-(3-hydroxydodecanoyl)-L-HSL (3-hydroxy-C(12)-HSL or OH-dDHL). Required for normal biofilm development. The protein is Acyl-homoserine-lactone synthase of Acinetobacter baumannii.